A 1062-amino-acid chain; its full sequence is 3-hydroxy-3-methylglutaryl-coenzyme A reductase 2 (1062 aa).

Over methionine 1–proline 34 the chain is Cytoplasmic. The helical transmembrane segment at isoleucine 35 to glycine 55 threads the bilayer. The Lumenal segment spans residues serine 56–glutamine 230. Asparagine 61 is a glycosylation site (N-linked (GlcNAc...) asparagine). A helical membrane pass occupies residues isoleucine 231–leucine 251. An SSD domain is found at aspartate 233–valine 403. The Cytoplasmic segment spans residues phenylalanine 252–arginine 261. The helical transmembrane segment at phenylalanine 262 to valine 282 threads the bilayer. Residues threonine 283–glycine 287 lie on the Lumenal side of the membrane. A helical membrane pass occupies residues valine 288–phenylalanine 308. At glutamate 309 to aspartate 355 the chain is on the cytoplasmic side. A helical membrane pass occupies residues tyrosine 356–leucine 375. Residues proline 376 to glutamine 377 are Lumenal-facing. A helical membrane pass occupies residues phenylalanine 378 to isoleucine 398. Topologically, residues serine 399–lysine 450 are cytoplasmic. The chain crosses the membrane as a helical span at residues phenylalanine 451 to glycine 471. At asparagine 472–proline 564 the chain is on the lumenal side. A glycan (N-linked (GlcNAc...) asparagine) is linked at asparagine 484. The chain crosses the membrane as a helical span at residues valine 565–methionine 585. Over lysine 586–glycine 1062 the chain is Cytoplasmic. The active-site Charge relay system is glutamate 744. CoA is bound at residue serine 750–lysine 756. NADP(+) is bound by residues serine 811–phenylalanine 813 and aspartate 838–serine 846. Lysine 877 (charge relay system) is an active-site residue. Valine 906–lysine 908 serves as a coordination point for CoA. Residue aspartate 953 is the Charge relay system of the active site. CoA is bound at residue alanine 1048 to histidine 1049. Histidine 1049 functions as the Proton donor in the catalytic mechanism. NADP(+) is bound at residue asparagine 1053 to arginine 1054.

The protein belongs to the HMG-CoA reductase family.

The protein localises to the endoplasmic reticulum membrane. It catalyses the reaction (R)-mevalonate + 2 NADP(+) + CoA = (3S)-3-hydroxy-3-methylglutaryl-CoA + 2 NADPH + 2 H(+). It participates in metabolic intermediate biosynthesis; (R)-mevalonate biosynthesis; (R)-mevalonate from acetyl-CoA: step 3/3. Functionally, HMG-CoA reductase; part of the first module of ergosterol biosynthesis pathway that includes the early steps of the pathway, conserved across all eukaryotes, and which results in the formation of mevalonate from acetyl-coenzyme A (acetyl-CoA). Hmg1 and hmg2 catalyze the reduction of hydroxymethylglutaryl-CoA (HMG-CoA) to mevalonate. The first module starts with the action of the cytosolic acetyl-CoA acetyltransferase erg10B that catalyzes the formation of acetoacetyl-CoA. The hydroxymethylglutaryl-CoA synthases erg13A and erg13B then condense acetyl-CoA with acetoacetyl-CoA to form HMG-CoA. The rate-limiting step of the early module is the reduction to mevalonate by the 3-hydroxy-3-methylglutaryl-coenzyme A (HMG-CoA) reductases hmg1 and hmg2. Mevalonate is also a precursor for the extracellular siderophore triacetylfusarinine C (TAFC). The polypeptide is 3-hydroxy-3-methylglutaryl-coenzyme A reductase 2 (Aspergillus fumigatus (strain ATCC MYA-4609 / CBS 101355 / FGSC A1100 / Af293) (Neosartorya fumigata)).